The following is a 320-amino-acid chain: Acetyl-coenzyme A carboxylase carboxyl transferase subunit alpha (320 aa).

In terms of domain architecture, CoA carboxyltransferase C-terminal spans 34–288 (RLEEALEAAR…GEALERVLAG (255 aa)).

The protein belongs to the AccA family. In terms of assembly, acetyl-CoA carboxylase is a heterohexamer composed of biotin carboxyl carrier protein (AccB), biotin carboxylase (AccC) and two subunits each of ACCase subunit alpha (AccA) and ACCase subunit beta (AccD).

The protein resides in the cytoplasm. The catalysed reaction is N(6)-carboxybiotinyl-L-lysyl-[protein] + acetyl-CoA = N(6)-biotinyl-L-lysyl-[protein] + malonyl-CoA. It functions in the pathway lipid metabolism; malonyl-CoA biosynthesis; malonyl-CoA from acetyl-CoA: step 1/1. Component of the acetyl coenzyme A carboxylase (ACC) complex. First, biotin carboxylase catalyzes the carboxylation of biotin on its carrier protein (BCCP) and then the CO(2) group is transferred by the carboxyltransferase to acetyl-CoA to form malonyl-CoA. The chain is Acetyl-coenzyme A carboxylase carboxyl transferase subunit alpha from Rubrobacter xylanophilus (strain DSM 9941 / JCM 11954 / NBRC 16129 / PRD-1).